A 128-amino-acid polypeptide reads, in one-letter code: Small ribosomal subunit protein uS12 (128 aa).

The residue at position 89 (aspartate 89) is a 3-methylthioaspartic acid. The disordered stretch occupies residues 101-128 (SLDTSGVADRRQGRSKYGAKRPKGAAAK). Residues 113-128 (GRSKYGAKRPKGAAAK) show a composition bias toward basic residues.

The protein belongs to the universal ribosomal protein uS12 family. As to quaternary structure, part of the 30S ribosomal subunit. Contacts proteins S8 and S17. May interact with IF1 in the 30S initiation complex.

Functionally, with S4 and S5 plays an important role in translational accuracy. Interacts with and stabilizes bases of the 16S rRNA that are involved in tRNA selection in the A site and with the mRNA backbone. Located at the interface of the 30S and 50S subunits, it traverses the body of the 30S subunit contacting proteins on the other side and probably holding the rRNA structure together. The combined cluster of proteins S8, S12 and S17 appears to hold together the shoulder and platform of the 30S subunit. The protein is Small ribosomal subunit protein uS12 of Prosthecochloris aestuarii (strain DSM 271 / SK 413).